The primary structure comprises 166 residues: Putative transcriptional regulatory protein for hcr operon (166 aa).

The 155-residue stretch at 1 to 155 (MRKHRGKPAN…LIGLLKRLYR (155 aa)) folds into the HTH marR-type domain.

May be involved in the regulation of genes for 4-hydroxybenzoyl-CoA reductase. The protein is Putative transcriptional regulatory protein for hcr operon of Thauera aromatica.